The chain runs to 727 residues: Iron-sulfur clusters transporter atm1, mitochondrial (727 aa).

The tract at residues 46–97 (NSPLRKDASKEPALASNSKTTNPIPTQASASVNPPKDARNATTAKKDLLSET) is disordered. Residues 60 to 77 (ASNSKTTNPIPTQASASV) are compositionally biased toward polar residues. Residues 81–94 (KDARNATTAKKDLL) are compositionally biased toward basic and acidic residues. The helical transmembrane segment at 131-152 (VGTALSLLVGAKILNVEVPFYF) threads the bilayer. One can recognise an ABC transmembrane type-1 domain in the interval 131–421 (VGTALSLLVG…LGSVYRELRQ (291 aa)). The Mitochondrial intermembrane segment spans residues 153–175 (KSIVDSMNIDFATVGGTAYTVAG). A helical transmembrane segment spans residues 176–199 (SMIIAYGVTRIGATLFQELRNAVF). Residues 200 to 248 (ASVAQKAIRRVARNVFEHLLRLDLNFHLSRQTGGLTRAIDRGTKGISFL) lie on the Mitochondrial matrix side of the membrane. The helical transmembrane segment at 249–272 (LTSMVFHVVPTALEISLVCGILTY) threads the bilayer. Position 273 (glutamine 273) is a topological domain, mitochondrial intermembrane. A helical membrane pass occupies residues 274 to 294 (YGFQFAAITAATMVAYTAFTI). The Mitochondrial matrix segment spans residues 295–360 (TTTAWRTKFR…ASIKVTTSLA (66 aa)). Glutathione-binding positions include 300-304 (RTKFR) and 363-366 (NSGQ). Residues 361–379 (FLNSGQNMIFSSALAAMMY) form a helical membrane-spanning segment. Topologically, residues 380-394 (LAANGVANGNLTVGD) are mitochondrial intermembrane. A helical membrane pass occupies residues 395 to 416 (LVMVNQLVFQLSVPLNFLGSVY). Glycine 413 is a binding site for glutathione. Residues 417–727 (RELRQSLLDM…DMAPGPKAQQ (311 aa)) lie on the Mitochondrial matrix side of the membrane. An ABC transporter domain is found at 456-692 (IRFENVTFGY…NGIYAELWNA (237 aa)). ATP-binding positions include tyrosine 465 and 489-500 (GPSGCGKSTILR). Basic and acidic residues predominate over residues 702–719 (EFERETERDDVESKERDM). The segment at 702–727 (EFERETERDDVESKERDMAPGPKAQQ) is disordered.

This sequence belongs to the ABC transporter superfamily. ABCB family. Heavy Metal importer (TC 3.A.1.210) subfamily. In terms of assembly, homodimer.

Its subcellular location is the mitochondrion inner membrane. Its function is as follows. Performs an essential function in the generation of cytoplasmic iron-sulfur proteins by mediating the ATP-dependent export of Fe/S cluster precursors synthesized by nfs1 and other mitochondrial proteins. Hydrolyzes ATP. Binds glutathione and may function by transporting a glutathione-conjugated iron-sulfur compound. This is Iron-sulfur clusters transporter atm1, mitochondrial from Aspergillus fumigatus (strain ATCC MYA-4609 / CBS 101355 / FGSC A1100 / Af293) (Neosartorya fumigata).